Here is a 248-residue protein sequence, read N- to C-terminus: Ubiquinone biosynthesis O-methyltransferase (248 aa).

The S-adenosyl-L-methionine site is built by R41, G72, D93, and M136.

This sequence belongs to the methyltransferase superfamily. UbiG/COQ3 family.

It catalyses the reaction a 3-demethylubiquinol + S-adenosyl-L-methionine = a ubiquinol + S-adenosyl-L-homocysteine + H(+). The catalysed reaction is a 3-(all-trans-polyprenyl)benzene-1,2-diol + S-adenosyl-L-methionine = a 2-methoxy-6-(all-trans-polyprenyl)phenol + S-adenosyl-L-homocysteine + H(+). Its pathway is cofactor biosynthesis; ubiquinone biosynthesis. O-methyltransferase that catalyzes the 2 O-methylation steps in the ubiquinone biosynthetic pathway. The chain is Ubiquinone biosynthesis O-methyltransferase from Brucella abortus (strain 2308).